A 168-amino-acid polypeptide reads, in one-letter code: CASP-like protein UU-1 (168 aa).

The Cytoplasmic segment spans residues 1–17 (MVELESQEAVTVASTAD). The helical transmembrane segment at 18–38 (IAVDVSLRLLAAATSLAAAVV) threads the bilayer. The Extracellular segment spans residues 39-54 (VAANHQQRWGIRVDFT). A helical membrane pass occupies residues 55–75 (LFQVWIGFVAVNLVCTVYAAA). Topologically, residues 76-95 (TAAAAARKAMGRWWLHHADA) are cytoplasmic. A helical membrane pass occupies residues 96–116 (VVVNLEAAATAGAGAIGSIAM). The Extracellular segment spans residues 117 to 136 (WGNEASGWYAVCRLYRRYCN). Residues 137 to 157 (AGAAALALSLAAVLLLGVACA) form a helical membrane-spanning segment. Residues 158 to 168 (RSRYPKMPPTT) lie on the Cytoplasmic side of the membrane.

It belongs to the Casparian strip membrane proteins (CASP) family. In terms of assembly, homodimer and heterodimers.

Its subcellular location is the cell membrane. This chain is CASP-like protein UU-1, found in Oryza sativa subsp. japonica (Rice).